Here is a 113-residue protein sequence, read N- to C-terminus: Hydrogenase maturation factor HypA (113 aa).

H2 serves as a coordination point for Ni(2+). Residues C73, C76, C89, and C92 each coordinate Zn(2+).

The protein belongs to the HypA/HybF family.

Involved in the maturation of [NiFe] hydrogenases. Required for nickel insertion into the metal center of the hydrogenase. The polypeptide is Hydrogenase maturation factor HypA (Alkalilimnicola ehrlichii (strain ATCC BAA-1101 / DSM 17681 / MLHE-1)).